Here is a 265-residue protein sequence, read N- to C-terminus: Homeobox protein CDX-1 (265 aa).

Residues lysine 9 to arginine 152 form a disordered region. Pro residues predominate over residues tyrosine 30–proline 43. Positions alanine 73–phenylalanine 92 are enriched in low complexity. The segment covering glycine 93–glycine 108 has biased composition (pro residues). The span at glycine 110 to glycine 126 shows a compositional bias: low complexity. Residues lysine 154–asparagine 213 constitute a DNA-binding region (homeobox). The tract at residues tyrosine 157 to tyrosine 178 is interaction with DNA. The interaction with 5-mCpG DNA stretch occupies residues arginine 196–alanine 207. Basic residues predominate over residues arginine 206 to glutamine 217. Residues arginine 206–proline 265 are disordered. Residues proline 245 to proline 256 show a composition bias toward polar residues.

The protein belongs to the Caudal homeobox family.

It is found in the nucleus. Its function is as follows. Plays a role in transcriptional regulation. Involved in activated KRAS-mediated transcriptional activation of PRKD1 in colorectal cancer (CRC) cells. Binds to the PRKD1 promoter in colorectal cancer (CRC) cells. Could play a role in the terminal differentiation of the intestine. Binds preferentially to methylated DNA. This is Homeobox protein CDX-1 (CDX1) from Pongo pygmaeus (Bornean orangutan).